A 167-amino-acid chain; its full sequence is Ubiquitin-conjugating enzyme E2 2 (167 aa).

Residues 4-150 (PARRRLMRDF…VKETVEKSWE (147 aa)) form the UBC core domain. Cys-88 acts as the Glycyl thioester intermediate in catalysis. The disordered stretch occupies residues 148–167 (SWEDNMDDMDDSDEDDEDDE). Positions 151-167 (DNMDDMDDSDEDDEDDE) are enriched in acidic residues.

It belongs to the ubiquitin-conjugating enzyme family.

The protein localises to the cytoplasm. Its subcellular location is the nucleus. It catalyses the reaction S-ubiquitinyl-[E1 ubiquitin-activating enzyme]-L-cysteine + [E2 ubiquitin-conjugating enzyme]-L-cysteine = [E1 ubiquitin-activating enzyme]-L-cysteine + S-ubiquitinyl-[E2 ubiquitin-conjugating enzyme]-L-cysteine.. Its pathway is protein modification; protein ubiquitination. Its function is as follows. Catalyzes the covalent attachment of ubiquitin to other proteins. Plays a role in transcription regulation by catalyzing the monoubiquitination of histone H2B to form H2BK123ub1. H2BK123ub1 gives a specific tag for epigenetic transcriptional activation and is also a prerequisite for H3K4me and H3K79me formation. Also involved in postreplication repair of UV-damaged DNA, in N-end rule-dependent protein degradation and in sporulation. This chain is Ubiquitin-conjugating enzyme E2 2 (UBC2), found in Candida glabrata (strain ATCC 2001 / BCRC 20586 / JCM 3761 / NBRC 0622 / NRRL Y-65 / CBS 138) (Yeast).